We begin with the raw amino-acid sequence, 249 residues long: Proteasome activator complex subunit 1 (249 aa).

Residues 60 to 102 form a disordered region; that stretch reads PLDIPVPDPVKEKEKEERKKQQEKEEKDEKKKGDEDDKGPPCG. The span at 68–98 shows a compositional bias: basic and acidic residues; that stretch reads PVKEKEKEERKKQQEKEEKDEKKKGDEDDKG.

This sequence belongs to the PA28 family. In terms of assembly, heterodimer of PSME1 and PSME2, which forms a hexameric ring. PSME1 can form homoheptamers.

Functionally, implicated in immunoproteasome assembly and required for efficient antigen processing. The PA28 activator complex enhances the generation of class I binding peptides by altering the cleavage pattern of the proteasome. The polypeptide is Proteasome activator complex subunit 1 (Psme1) (Rattus norvegicus (Rat)).